A 242-amino-acid polypeptide reads, in one-letter code: TGACG-sequence-specific DNA-binding protein TGA-1B (242 aa).

The segment at 1–125 (EFCDFSGNQA…HSSPNFENNS (125 aa)) is disordered. A compositionally biased stretch (polar residues) spans 18–45 (DTSSPELRQSSSGSDVLNATSSTSSHQV). Over residues 66 to 79 (EGSRESANDNKGLG) the composition is skewed to basic and acidic residues. Positions 88–125 (SPESQGSGNYGSNVSEGLNYPSDSNKSVHSSPNFENNS) are enriched in polar residues. The region spanning 183-242 (DEKKRARLVRNRESAQLSRQRKKHYVEELEDKVRIMHSTIQDLNAKVAYIIAENATLKTQ) is the bZIP domain. Residues 185 to 216 (KKRARLVRNRESAQLSRQRKKHYVEELEDKVR) form a basic motif region. The tract at residues 225-239 (LNAKVAYIIAENATL) is leucine-zipper.

Belongs to the bZIP family.

It localises to the nucleus. Its function is as follows. Binds specifically to the DNA sequence 5'-TGACG-3'. The protein is TGACG-sequence-specific DNA-binding protein TGA-1B (TGA1B) of Nicotiana tabacum (Common tobacco).